Here is a 101-residue protein sequence, read N- to C-terminus: Small ribosomal subunit protein uS14 (101 aa).

A disordered region spans residues 1-23 (MAKKSSVEKNKRRRKMVAQQAPK).

This sequence belongs to the universal ribosomal protein uS14 family. As to quaternary structure, part of the 30S ribosomal subunit. Contacts proteins S3 and S10.

Functionally, binds 16S rRNA, required for the assembly of 30S particles and may also be responsible for determining the conformation of the 16S rRNA at the A site. This is Small ribosomal subunit protein uS14 from Rhodospirillum centenum (strain ATCC 51521 / SW).